Consider the following 154-residue polypeptide: 17 kDa surface antigen (154 aa).

The first 19 residues, 1 to 19 (MKLLSKIMIIALAASMLQA), serve as a signal peptide directing secretion. Cys-20 is lipidated: N-palmitoyl cysteine. A lipid anchor (S-diacylglycerol cysteine) is attached at Cys-20.

It belongs to the rickettsiale 17 kDa surface antigen family.

It localises to the cell outer membrane. This chain is 17 kDa surface antigen (omp), found in Rickettsia montanensis.